The primary structure comprises 319 residues: ATP-dependent 6-phosphofructokinase (319 aa).

Glycine 11 lines the ATP pocket. Residue 21–25 (RAVTR) participates in ADP binding. Residues 72 to 73 (RF) and 102 to 105 (GDGS) each bind ATP. Position 103 (aspartate 103) interacts with Mg(2+). 125-127 (SID) serves as a coordination point for substrate. Catalysis depends on aspartate 127, which acts as the Proton acceptor. Arginine 154 lines the ADP pocket. Substrate is bound by residues arginine 162 and 169 to 171 (MGR). ADP is bound by residues 185 to 187 (GAD) and 213 to 215 (KKH). Substrate is bound by residues glutamate 222, arginine 243, and 249–252 (HMQR).

It belongs to the phosphofructokinase type A (PFKA) family. ATP-dependent PFK group I subfamily. Prokaryotic clade 'B1' sub-subfamily. Homotetramer. Mg(2+) is required as a cofactor.

The protein localises to the cytoplasm. The enzyme catalyses beta-D-fructose 6-phosphate + ATP = beta-D-fructose 1,6-bisphosphate + ADP + H(+). It participates in carbohydrate degradation; glycolysis; D-glyceraldehyde 3-phosphate and glycerone phosphate from D-glucose: step 3/4. Its activity is regulated as follows. Allosterically activated by ADP and other diphosphonucleosides, and allosterically inhibited by phosphoenolpyruvate. In terms of biological role, catalyzes the phosphorylation of D-fructose 6-phosphate to fructose 1,6-bisphosphate by ATP, the first committing step of glycolysis. In Lactobacillus gasseri (strain ATCC 33323 / DSM 20243 / BCRC 14619 / CIP 102991 / JCM 1131 / KCTC 3163 / NCIMB 11718 / NCTC 13722 / AM63), this protein is ATP-dependent 6-phosphofructokinase.